Here is a 532-residue protein sequence, read N- to C-terminus: Probable bifunctional tRNA threonylcarbamoyladenosine biosynthesis protein (532 aa).

The kae1 stretch occupies residues 1-323 (MRVLGVEGTA…FRPDEVSVTW (323 aa)). Histidine 107 and histidine 111 together coordinate Fe cation. L-threonylcarbamoyladenylate contacts are provided by residues 128 to 132 (NASGA), aspartate 160, glycine 173, glutamate 177, and asparagine 256. Aspartate 284 is a Fe cation binding site. The Protein kinase domain occupies 329 to 532 (PARDPGADAV…GRYQDDPETA (204 aa)). Residues 338–346 (VRQGAEATV) and lysine 355 each bind ATP. Catalysis depends on aspartate 444, which acts as the Proton acceptor; for kinase activity.

In the N-terminal section; belongs to the KAE1 / TsaD family. It in the C-terminal section; belongs to the protein kinase superfamily. Tyr protein kinase family. BUD32 subfamily. As to quaternary structure, component of the KEOPS complex that consists of Kae1, Bud32, Cgi121 and Pcc1; the whole complex dimerizes. Fe(2+) serves as cofactor.

It is found in the cytoplasm. The catalysed reaction is L-seryl-[protein] + ATP = O-phospho-L-seryl-[protein] + ADP + H(+). It carries out the reaction L-threonyl-[protein] + ATP = O-phospho-L-threonyl-[protein] + ADP + H(+). The enzyme catalyses L-threonylcarbamoyladenylate + adenosine(37) in tRNA = N(6)-L-threonylcarbamoyladenosine(37) in tRNA + AMP + H(+). Functionally, required for the formation of a threonylcarbamoyl group on adenosine at position 37 (t(6)A37) in tRNAs that read codons beginning with adenine. Is a component of the KEOPS complex that is probably involved in the transfer of the threonylcarbamoyl moiety of threonylcarbamoyl-AMP (TC-AMP) to the N6 group of A37. The Kae1 domain likely plays a direct catalytic role in this reaction. The Bud32 domain probably displays kinase activity that regulates Kae1 function. The polypeptide is Probable bifunctional tRNA threonylcarbamoyladenosine biosynthesis protein (Halobacterium salinarum (strain ATCC 700922 / JCM 11081 / NRC-1) (Halobacterium halobium)).